A 304-amino-acid polypeptide reads, in one-letter code: Trypsin-3 (304 aa).

The region spanning 81–301 (IVGGYTCEEN…YVDWIKDTIA (221 aa)) is the Peptidase S1 domain. 5 disulfides stabilise this stretch: cysteine 87-cysteine 217, cysteine 105-cysteine 121, cysteine 196-cysteine 263, cysteine 228-cysteine 242, and cysteine 253-cysteine 277. Catalysis depends on histidine 120, which acts as the Charge relay system. Ca(2+) is bound by residues glutamate 132, asparagine 134, valine 137, glutamate 139, and glutamate 142. Aspartate 164 functions as the Charge relay system in the catalytic mechanism. Tyrosine 211 carries the post-translational modification Sulfotyrosine. The active-site Charge relay system is serine 257.

This sequence belongs to the peptidase S1 family. Requires Ca(2+) as cofactor. Detected in pancreas and pancreatic fluid (at protein level). Expressed in pancreas and brain. Detected in ileum.

The protein resides in the secreted. The enzyme catalyses Preferential cleavage: Arg-|-Xaa, Lys-|-Xaa.. With respect to regulation, not inhibited by Kunitz-type trypsin inhibitors. Digestive protease that cleaves proteins preferentially after an Arg residue and has proteolytic activity toward Kunitz-type trypsin inhibitors. In Homo sapiens (Human), this protein is Trypsin-3 (PRSS3).